The primary structure comprises 642 residues: Eukaryotic translation initiation factor 2A (642 aa).

WD repeat units follow at residues 69 to 115 (MKLS…KKDC), 186 to 224 (TYLI…ITKK), 289 to 331 (LTTG…HSLP), and 374 to 419 (FDAT…VFVK). The interval 485 to 593 (ISQHPSREAS…KETSPEEKKI (109 aa)) is disordered. 2 stretches are compositionally biased toward low complexity: residues 493 to 507 (ASSN…AGGA) and 563 to 583 (TSPD…PTNN). Residues Ser-564, Ser-567, and Ser-572 each carry the phosphoserine modification.

It belongs to the WD repeat EIF2A family. Post-translationally, ubiquitinated, probably leading to its degradation. May explain why it has a short half-life of 17 minutes.

Its function is as follows. Functions in the early steps of protein synthesis of a small number of specific mRNAs. Acts by directing the binding of methionyl-tRNAi to 40S ribosomal subunits. In contrast to the eIF-2 complex, it binds methionyl-tRNAi to 40S subunits in a codon-dependent manner, whereas the eIF-2 complex binds methionyl-tRNAi to 40S subunits in a GTP-dependent manner. Specifically associates with both 40S subunits and 80S ribosomes. The chain is Eukaryotic translation initiation factor 2A from Saccharomyces cerevisiae (strain ATCC 204508 / S288c) (Baker's yeast).